The primary structure comprises 320 residues: MKTKKSYDKVTRWVTPPILMLIIIHIITGACSSNAYPIFAQKSYENPREATGRIVCANCHLAKKSVEVEVPQSVLPNSVFEAVVKIPYDTQIKQVLANGKKGGLNVGAVLILPEGFELAPPERISPEIKEKMGTLNFQNYSPSKKNIIVIGPIPGQKYQEILFPILSPDPANKKEIHFQKYPIYVGGNRGRGQIYPNGSKSNNTVYNASVTGRISQILRKEKGGYEVTIENISQGRSVIDIIPPGPELLVSEGEFVKADQPLTNNPNVGGFGQINAEIVLQDPSRIQGLLGFLASVVLAQIFLVLKKKQFEKVQLAEMEF.

Residues 1-32 (MKTKKSYDKVTRWVTPPILMLIIIHIITGACS) form the signal peptide. Heme contacts are provided by Tyr36, Cys56, Cys59, and His60. The helical transmembrane segment at 286-306 (IQGLLGFLASVVLAQIFLVLK) threads the bilayer.

It belongs to the cytochrome f family. As to quaternary structure, the 4 large subunits of the cytochrome b6-f complex are cytochrome b6, subunit IV (17 kDa polypeptide, petD), cytochrome f and the Rieske protein, while the 4 small subunits are PetG, PetL, PetM and PetN. The complex functions as a dimer. Heme serves as cofactor.

It is found in the plastid. The protein resides in the chloroplast thylakoid membrane. In terms of biological role, component of the cytochrome b6-f complex, which mediates electron transfer between photosystem II (PSII) and photosystem I (PSI), cyclic electron flow around PSI, and state transitions. The sequence is that of Cytochrome f from Gnetum parvifolium (Small-leaved jointfir).